A 435-amino-acid chain; its full sequence is Apparent malate synthase (435 aa).

Mg(2+)-binding residues include Glu159 and Asn180. A substrate-binding site is contributed by Glu159.

Belongs to the HpcH/HpaI aldolase family. Mg(2+) serves as cofactor. Requires Mn(2+) as cofactor. It depends on Co(2+) as a cofactor. Ca(2+) is required as a cofactor.

It carries out the reaction (S)-malyl-CoA = glyoxylate + acetyl-CoA. The catalysed reaction is (S)-malyl-CoA + H2O = (S)-malate + CoA + H(+). Functionally, involved in the methylaspartate cycle. Catalyzes the biosynthesis of malate in two steps. In the first reaction acetyl-CoA is condensed reversibly with glyoxylate to form (S)-malyl-CoA. In the second reaction (S)-malyl-CoA is hydrolyzed to malate and CoA. It can also catalyze the condensation of propionyl-CoA with glyoxylate and of acetyl-CoA with pyruvate, however the CoA-ester hydrolysis reaction is highly specific for (S)-malyl-CoA. In Haloarcula marismortui (strain ATCC 43049 / DSM 3752 / JCM 8966 / VKM B-1809) (Halobacterium marismortui), this protein is Apparent malate synthase (aceB).